We begin with the raw amino-acid sequence, 429 residues long: MKTELSEKLFAKAQTLFPGGVNSPVRAFRGVGGTPRFIARGKGSHLFDVDGNDYVDYVLSWGPMIVGHAHPEVMREVQDAMKEGASFGAPSPREITLAELVRERMPWIEKMRFCSSGTEATTAAIRVARGFTSRDDILKFEGCYHGAGDPLLVKAGSGVETLGLPDSPGVPADLAKHTLTLPYNDLAAVERLFAERGGSIACVIIEPVVGNMGVLVPKDGYLQGLLALCRKHGALFIVDEVMTGFRVSSGGACGLFGVRPDLVTFGKVIGGGLPVGAFGGRADVMDRVAPAGPIYQAGTLSGNPMAMAAGHATLRLMTGAAYEKLERLSAKLADGLRERAAAAKVPVQVNRVGSMLTVFFAEQPVFDAASARAASTKRFGAFFHRMLEGGAYLPPSQFEAAFLSTAHSEGDVEQTLHASEAAFAEAAKV.

Residue lysine 267 is modified to N6-(pyridoxal phosphate)lysine.

It belongs to the class-III pyridoxal-phosphate-dependent aminotransferase family. HemL subfamily. Homodimer. The cofactor is pyridoxal 5'-phosphate.

It is found in the cytoplasm. It carries out the reaction (S)-4-amino-5-oxopentanoate = 5-aminolevulinate. The protein operates within porphyrin-containing compound metabolism; protoporphyrin-IX biosynthesis; 5-aminolevulinate from L-glutamyl-tRNA(Glu): step 2/2. The sequence is that of Glutamate-1-semialdehyde 2,1-aminomutase from Anaeromyxobacter sp. (strain Fw109-5).